We begin with the raw amino-acid sequence, 351 residues long: Glycerol-1-phosphate dehydrogenase [NAD(P)+] (351 aa).

Residues 97–101 (GTVID) and 119–122 (TSPS) contribute to the NAD(+) site. Asp-124 serves as a coordination point for substrate. Ser-128 is a binding site for NAD(+). Asp-171 serves as a coordination point for substrate. Positions 171 and 251 each coordinate Zn(2+). Position 255 (His-255) interacts with substrate. A Zn(2+)-binding site is contributed by His-267.

It belongs to the glycerol-1-phosphate dehydrogenase family. Homodimer. Zn(2+) serves as cofactor.

Its subcellular location is the cytoplasm. The enzyme catalyses sn-glycerol 1-phosphate + NAD(+) = dihydroxyacetone phosphate + NADH + H(+). The catalysed reaction is sn-glycerol 1-phosphate + NADP(+) = dihydroxyacetone phosphate + NADPH + H(+). It participates in membrane lipid metabolism; glycerophospholipid metabolism. In terms of biological role, catalyzes the NAD(P)H-dependent reduction of dihydroxyacetonephosphate (DHAP or glycerone phosphate) to glycerol 1-phosphate (G1P). The G1P thus generated is used as the glycerophosphate backbone of phospholipids in the cellular membranes of Archaea. The polypeptide is Glycerol-1-phosphate dehydrogenase [NAD(P)+] (Sulfolobus acidocaldarius (strain ATCC 33909 / DSM 639 / JCM 8929 / NBRC 15157 / NCIMB 11770)).